The chain runs to 1233 residues: Rho guanine nucleotide exchange factor 10-like protein (1233 aa).

Pro residues predominate over residues 1–10 (MASSNPPPQP). The segment at 1–93 (MASSNPPPQP…GTGVPAWVSN (93 aa)) is disordered. Residues 26–46 (EAEDDPGEAFEFDDSDDEEDT) show a composition bias toward acidic residues. Ser-40 is modified (phosphoserine). The segment covering 72–89 (PVTDPDPAAAPPGTGVPA) has biased composition (low complexity). 2 positions are modified to phosphotyrosine: Tyr-131 and Tyr-152. A disordered region spans residues 159–193 (GAPRQAEDLGWSSSEFESYSEDSGEEAKPEVEPAK). A compositionally biased stretch (basic and acidic residues) spans 183-193 (EEAKPEVEPAK). The residue at position 240 (Ser-240) is a Phosphoserine. One can recognise a DH domain in the interval 275-462 (VRRHILGSIV…ETLAEKLNEQ (188 aa)). Residues 1089–1104 (QEEAEGPRAEEEKPDG) show a composition bias toward basic and acidic residues. Disordered regions lie at residues 1089-1117 (QEEA…HVGR) and 1140-1161 (PLLS…SEED).

As to quaternary structure, interacts with RHOA, RHOB and RHOC.

The protein resides in the cytoplasm. Functionally, acts as a guanine nucleotide exchange factor (GEF) for RHOA, RHOB and RHOC. The protein is Rho guanine nucleotide exchange factor 10-like protein (ARHGEF10L) of Pongo abelii (Sumatran orangutan).